Consider the following 742-residue polypeptide: Kanadaptin (742 aa).

Polar residues predominate over residues 1–16 (MADILSQSETLASQDL). The disordered stretch occupies residues 1–112 (MADILSQSET…PPWGGPATAP (112 aa)). Residues 27-43 (VSPAARSKAPASSSSNP) show a composition bias toward low complexity. Phosphoserine is present on serine 28. The span at 72–82 (GDFRSLQEEQS) shows a compositional bias: basic and acidic residues. Phosphoserine is present on serine 90. A compositionally biased stretch (pro residues) spans 96–106 (RAPPYQEPPWG). The region spanning 135–195 (CLFGRLSGCD…HGTFLNKTRI (61 aa)) is the FHA domain. The segment at 254–282 (LGEDSDEEEEMDTSERKINAGSQDDEMGC) is disordered. The span at 256–265 (EDSDEEEEMD) shows a compositional bias: acidic residues. Phosphoserine occurs at positions 258 and 412. Lysine 441 participates in a covalent cross-link: Glycyl lysine isopeptide (Lys-Gly) (interchain with G-Cter in SUMO2). The stretch at 443–476 (ETFESLVAKLNDAERELSEISERLKASSQVLSES) forms a coiled coil. Residue serine 476 is modified to Phosphoserine. The interval 565 to 742 (LKTGTVGKLP…RTHLNDKYGY (178 aa)) is disordered. A compositionally biased stretch (acidic residues) spans 591-606 (PEVEEEEEEEEEEEKE). Residues 607 to 619 (KEEHEKKKLEDGS) are compositionally biased toward basic and acidic residues. Phosphoserine is present on residues serine 655 and serine 658. Residues 699–708 (PGPGKLPPTL) are compositionally biased toward low complexity. Residues 732–742 (GRTHLNDKYGY) are compositionally biased toward basic and acidic residues.

In terms of tissue distribution, ubiquitously expressed.

The protein localises to the nucleus. It is found in the cytoplasm. This chain is Kanadaptin (SLC4A1AP), found in Homo sapiens (Human).